The primary structure comprises 469 residues: 2-amino-4-ketopentanoate thiolase beta subunit (469 aa).

N6-(pyridoxal phosphate)lysine is present on Lys-102. Residues Asn-128 and 238 to 242 (AGGGN) each bind pyridoxal 5'-phosphate.

This sequence belongs to the threonine synthase family. In terms of assembly, heterodimer with OrtA. Pyridoxal 5'-phosphate is required as a cofactor.

The catalysed reaction is D-alanine + acetyl-CoA = (2R)-2-amino-4-oxopentanoate + CoA. With respect to regulation, completely inhibited by p-chloromercuribenzoate (p-ClHgBzO) and acetyl-CoA, and partially inhibited by N-ethylmaleimide. Functionally, involved in the ornithine fermentation pathway. Catalyzes the thiolytic cleavage of 2-amino-4-ketopentanoate (AKP) with coenzyme A (CoA) to form acetyl-CoA and alanine. It is strictly specific for AKP. The sequence is that of 2-amino-4-ketopentanoate thiolase beta subunit from Acetoanaerobium sticklandii (strain ATCC 12662 / DSM 519 / JCM 1433 / CCUG 9281 / NCIMB 10654 / HF) (Clostridium sticklandii).